Consider the following 701-residue polypeptide: Triadin (701 aa).

The disordered stretch occupies residues Met-1–Pro-28. Topologically, residues Met-1–Pro-47 are cytoplasmic. The segment covering Gly-8 to Val-24 has biased composition (polar residues). Residues Ala-48 to Phe-68 form a helical membrane-spanning segment. The Lumenal portion of the chain corresponds to Asp-69–Gln-701. N-linked (GlcNAc...) asparagine glycosylation is present at Asn-75. The segment covering Asp-117–Asp-130 has biased composition (acidic residues). Disordered regions lie at residues Asp-117 to Gln-256, Gly-273 to Gln-654, and Phe-676 to Gln-701. Basic and acidic residues-rich tracts occupy residues Lys-131 to Gln-256, Glu-303 to Glu-351, Ala-365 to Pro-385, Glu-391 to Thr-426, Gly-437 to Pro-485, and Val-492 to Glu-643. Asn-617 carries an N-linked (GlcNAc...) asparagine glycan. A compositionally biased stretch (low complexity) spans Pro-684–Gln-701.

In terms of assembly, homooligomer of variable subunit number; disulfide-linked. Interacts with CASQ1 and RYR1 in skeletal muscle. Interacts with CASQ2. In terms of processing, phosphorylated by CaMK2. Post-translationally, N-glycosylated. Detected in heart (at protein level). Skeletal and cardiac muscle.

Its subcellular location is the sarcoplasmic reticulum membrane. Functionally, contributes to the regulation of lumenal Ca2+ release via the sarcoplasmic reticulum calcium release channels RYR1 and RYR2, a key step in triggering skeletal and heart muscle contraction. Required for normal organization of the triad junction, where T-tubules and the sarcoplasmic reticulum terminal cisternae are in close contact. Required for normal skeletal muscle strength. Plays a role in excitation-contraction coupling in the heart and in regulating the rate of heart beats. The sequence is that of Triadin (TRDN) from Canis lupus familiaris (Dog).